Reading from the N-terminus, the 466-residue chain is Asparagine--tRNA ligase (466 aa).

Belongs to the class-II aminoacyl-tRNA synthetase family. Homodimer.

Its subcellular location is the cytoplasm. It catalyses the reaction tRNA(Asn) + L-asparagine + ATP = L-asparaginyl-tRNA(Asn) + AMP + diphosphate + H(+). The polypeptide is Asparagine--tRNA ligase (Vibrio vulnificus (strain YJ016)).